The chain runs to 278 residues: ATP synthase subunit delta (278 aa).

Belongs to the ATPase delta chain family. In terms of assembly, F-type ATPases have 2 components, F(1) - the catalytic core - and F(0) - the membrane proton channel. F(1) has five subunits: alpha(3), beta(3), gamma(1), delta(1), epsilon(1). F(0) has three main subunits: a(1), b(2) and c(10-14). The alpha and beta chains form an alternating ring which encloses part of the gamma chain. F(1) is attached to F(0) by a central stalk formed by the gamma and epsilon chains, while a peripheral stalk is formed by the delta and b chains.

Its subcellular location is the cell membrane. Its function is as follows. F(1)F(0) ATP synthase produces ATP from ADP in the presence of a proton or sodium gradient. F-type ATPases consist of two structural domains, F(1) containing the extramembraneous catalytic core and F(0) containing the membrane proton channel, linked together by a central stalk and a peripheral stalk. During catalysis, ATP synthesis in the catalytic domain of F(1) is coupled via a rotary mechanism of the central stalk subunits to proton translocation. Functionally, this protein is part of the stalk that links CF(0) to CF(1). It either transmits conformational changes from CF(0) to CF(1) or is implicated in proton conduction. The polypeptide is ATP synthase subunit delta (Bifidobacterium longum (strain DJO10A)).